A 168-amino-acid polypeptide reads, in one-letter code: Photosystem I assembly protein Ycf3 (168 aa).

3 TPR repeats span residues 29–62 (AFSY…EEDP), 66–99 (SYTL…NANL), and 117–150 (AQSL…APDN).

It belongs to the Ycf3 family.

It is found in the plastid. The protein resides in the chloroplast thylakoid membrane. In terms of biological role, essential for the assembly of the photosystem I (PSI) complex. May act as a chaperone-like factor to guide the assembly of the PSI subunits. The sequence is that of Photosystem I assembly protein Ycf3 from Phaeodactylum tricornutum (strain CCAP 1055/1).